The primary structure comprises 455 residues: Epoxide hydrolase 1 (455 aa).

A helical; Signal-anchor for type III membrane protein membrane pass occupies residues 1 to 21 (MWLELVLASLLGFVIYWFVSR). At 22–455 (DKEETLPLGD…RKFVSLAELQ (434 aa)) the chain is on the cytoplasmic side. The active-site Nucleophile is the Asp-226. Arg-295 is modified (dimethylated arginine). Catalysis depends on Tyr-374, which acts as the Proton donor. His-431 (proton acceptor) is an active-site residue. Lys-439 bears the N6-acetyllysine mark.

Belongs to the peptidase S33 family.

The protein localises to the microsome membrane. Its subcellular location is the endoplasmic reticulum membrane. The catalysed reaction is cis-stilbene oxide + H2O = (1R,2R)-hydrobenzoin. It catalyses the reaction 1-(4-methoxyphenyl)-N-methyl-N-[(3-methyloxetan-3-yl)methyl]methanamine + H2O = 2-{[(4-methoxybenzyl)(methyl)amino]methyl}-2-methylpropane-1,3-diol. It carries out the reaction 8,9-epoxy-(5Z,11Z,14Z)-eicosatrienoate + H2O = 8,9-dihydroxy-(5Z,11Z,14Z)-eicosatrienoate. The enzyme catalyses 11,12-epoxy-(5Z,8Z,14Z)-eicosatrienoate + H2O = 11,12-dihydroxy-(5Z,8Z,14Z)-eicosatrienoate. The catalysed reaction is 2-(5Z,8Z,11Z,14Z-eicosatetraenoyl)-glycerol + H2O = glycerol + (5Z,8Z,11Z,14Z)-eicosatetraenoate + H(+). Inhibited by 10-hydroxystearamide and methoxy-arachidonyl fluorophosphate. Functionally, biotransformation enzyme that catalyzes the hydrolysis of arene and aliphatic epoxides to less reactive and more water soluble dihydrodiols by the trans addition of water. May play a role in the metabolism of endogenous lipids such as epoxide-containing fatty acids. Metabolizes the abundant endocannabinoid 2-arachidonoylglycerol (2-AG) to free arachidonic acid (AA) and glycerol. Binds 20(S)-hydroxycholesterol (20(S)-OHC). In Rattus norvegicus (Rat), this protein is Epoxide hydrolase 1.